Consider the following 84-residue polypeptide: Cell division topological specificity factor (84 aa).

It belongs to the MinE family.

In terms of biological role, prevents the cell division inhibition by proteins MinC and MinD at internal division sites while permitting inhibition at polar sites. This ensures cell division at the proper site by restricting the formation of a division septum at the midpoint of the long axis of the cell. The polypeptide is Cell division topological specificity factor (Cupriavidus pinatubonensis (strain JMP 134 / LMG 1197) (Cupriavidus necator (strain JMP 134))).